A 337-amino-acid chain; its full sequence is GTP 3',8-cyclase (337 aa).

The region spanning 1 to 226 (MNRVDYLRIS…REKIRQKWGL (226 aa)) is the Radical SAM core domain. Arg8 is a GTP binding site. Residues Cys15 and Cys19 each contribute to the [4Fe-4S] cluster site. Residue Tyr21 coordinates S-adenosyl-L-methionine. Cys22 is a binding site for [4Fe-4S] cluster. Arg60 contributes to the GTP binding site. An S-adenosyl-L-methionine-binding site is contributed by Gly64. Thr91 provides a ligand contact to GTP. Ser115 lines the S-adenosyl-L-methionine pocket. GTP is bound at residue Lys155. S-adenosyl-L-methionine is bound at residue Met189. 2 residues coordinate [4Fe-4S] cluster: Cys260 and Cys263. 265–267 (RMR) is a GTP binding site. Cys277 lines the [4Fe-4S] cluster pocket.

This sequence belongs to the radical SAM superfamily. MoaA family. In terms of assembly, monomer and homodimer. The cofactor is [4Fe-4S] cluster.

The enzyme catalyses GTP + AH2 + S-adenosyl-L-methionine = (8S)-3',8-cyclo-7,8-dihydroguanosine 5'-triphosphate + 5'-deoxyadenosine + L-methionine + A + H(+). The protein operates within cofactor biosynthesis; molybdopterin biosynthesis. Functionally, catalyzes the cyclization of GTP to (8S)-3',8-cyclo-7,8-dihydroguanosine 5'-triphosphate. This is GTP 3',8-cyclase from Crocosphaera subtropica (strain ATCC 51142 / BH68) (Cyanothece sp. (strain ATCC 51142)).